Here is a 554-residue protein sequence, read N- to C-terminus: Glucose-6-phosphate isomerase (554 aa).

Glutamate 358 serves as the catalytic Proton donor. Residues histidine 389 and lysine 515 contribute to the active site. Positions 527–540 (SDGSPQRQSDSSTD) are enriched in polar residues. A disordered region spans residues 527 to 554 (SDGSPQRQSDSSTDALVRRYRTQRGRTG). Residues 544–554 (RRYRTQRGRTG) show a composition bias toward basic residues.

The protein belongs to the GPI family.

The protein resides in the cytoplasm. The enzyme catalyses alpha-D-glucose 6-phosphate = beta-D-fructose 6-phosphate. It participates in carbohydrate biosynthesis; gluconeogenesis. It functions in the pathway carbohydrate degradation; glycolysis; D-glyceraldehyde 3-phosphate and glycerone phosphate from D-glucose: step 2/4. Its function is as follows. Catalyzes the reversible isomerization of glucose-6-phosphate to fructose-6-phosphate. The polypeptide is Glucose-6-phosphate isomerase (Mycobacterium ulcerans (strain Agy99)).